We begin with the raw amino-acid sequence, 179 residues long: Large ribosomal subunit protein uL5 (179 aa).

Belongs to the universal ribosomal protein uL5 family. In terms of assembly, part of the 50S ribosomal subunit; part of the 5S rRNA/L5/L18/L25 subcomplex. Contacts the 5S rRNA and the P site tRNA. Forms a bridge to the 30S subunit in the 70S ribosome.

Its function is as follows. This is one of the proteins that bind and probably mediate the attachment of the 5S RNA into the large ribosomal subunit, where it forms part of the central protuberance. In the 70S ribosome it contacts protein S13 of the 30S subunit (bridge B1b), connecting the 2 subunits; this bridge is implicated in subunit movement. Contacts the P site tRNA; the 5S rRNA and some of its associated proteins might help stabilize positioning of ribosome-bound tRNAs. The polypeptide is Large ribosomal subunit protein uL5 (Marinobacter nauticus (strain ATCC 700491 / DSM 11845 / VT8) (Marinobacter aquaeolei)).